Here is an 886-residue protein sequence, read N- to C-terminus: Cytosolic carboxypeptidase-like protein 5 (886 aa).

The 414-residue stretch at 157-570 (YPFSYSDCQE…AMAIAALDMA (414 aa)) folds into the Peptidase M14 domain. Zn(2+) contacts are provided by His252 and Glu255. Residues 344–354 (SQSSSEHQPSS) show a composition bias toward low complexity. The interval 344 to 364 (SQSSSEHQPSSCLPPDAPVSD) is disordered. His434 serves as a coordination point for Zn(2+). Residue Glu516 is the Proton donor/acceptor of the active site. Disordered regions lie at residues 605–734 (STLN…SSHK) and 784–848 (LQAR…FSPI). Residues 631–640 (CSENTLSRAR) are compositionally biased toward polar residues. The span at 641 to 666 (SFSTGTSAGGSSSSQQNSPQMKNSPS) shows a compositional bias: low complexity. Basic and acidic residues predominate over residues 696-705 (REPRSQDRRR). Positions 714-732 (PAGSLAPSPAPTSSGPASS) are enriched in low complexity. At Ser841 the chain carries Phosphoserine.

Belongs to the peptidase M14 family. It depends on Zn(2+) as a cofactor. Expressed in brain.

Its subcellular location is the cytoplasm. It is found in the cytosol. The protein resides in the nucleus. It localises to the cytoskeleton. The protein localises to the spindle. Its subcellular location is the midbody. It carries out the reaction gamma-L-glutamyl-L-glutamyl-[protein] + H2O = L-glutamyl-[protein] + L-glutamate. The enzyme catalyses (L-glutamyl)(n+1)-gamma-L-glutamyl-L-glutamyl-[protein] + H2O = (L-glutamyl)(n)-gamma-L-glutamyl-L-glutamyl-[protein] + L-glutamate. It catalyses the reaction C-terminal L-alpha-aminoacyl-L-glutamyl-[tubulin] + H2O = C-terminal L-alpha-aminoacyl-[tubulin] + L-glutamate. The catalysed reaction is C-terminal L-alpha-aminoacyl-L-glutamyl-L-glutamyl-[tubulin] + H2O = C-terminal L-alpha-aminoacyl-L-glutamyl-[tubulin] + L-glutamate. Its function is as follows. Metallocarboxypeptidase that mediates deglutamylation of tubulin and non-tubulin target proteins. Catalyzes the removal of polyglutamate side chains present on the gamma-carboxyl group of glutamate residues within the C-terminal tail of alpha- and beta-tubulin. Cleaves alpha- and gamma-linked polyglutamate tubulin side-chain, as well as the branching point glutamate. Also catalyzes the removal of alpha-linked glutamate residues from the carboxy-terminus of alpha-tubulin. Mediates deglutamylation of nucleotidyltransferase CGAS, leading to CGAS antiviral defense response activation. The protein is Cytosolic carboxypeptidase-like protein 5 of Homo sapiens (Human).